The primary structure comprises 395 residues: MRTWVLLLAAGSGTRLATAGLPDAKQFLPLHGAPLYWASARTMAHVAGIEGIVFVFPPHRVEEERARISALDDGSVLGLDWHVVGGGAARQDSVACGLAALPRSCEAVLVHDAARPFASPALVARVLSALHDGHAGVVPGIPLTDTVKETTDGFVANTPDRSRLVAVQTPQGFTLKALSTAHETARTAGWNVTDDAALLERCGIPVRIVAGEVVNAKITTPEDLAMLDANEPQVTVPCVGWGYDVHRYGEGRPMKLGGVLIPEGPEVVAHSDGDVLLHALADALLGCIGAGDIGLHFPDSDAAFDNANSAMLLDRVLHMTHEARLRLTHVDLTIVAQVPKLSPWRDKIRANVARLLDLPVTSVNFKATTEEGLGFTGEKRGIKAIAAVTGLRPMP.

The 2-C-methyl-D-erythritol 4-phosphate cytidylyltransferase stretch occupies residues 1–237 (MRTWVLLLAA…DANEPQVTVP (237 aa)). The 2-C-methyl-D-erythritol 2,4-cyclodiphosphate synthase stretch occupies residues 238–395 (CVGWGYDVHR…AAVTGLRPMP (158 aa)). 2 residues coordinate a divalent metal cation: D244 and H246. Residues 244–246 (DVH) and 270–271 (HS) contribute to the 4-CDP-2-C-methyl-D-erythritol 2-phosphate site. H278 is a binding site for a divalent metal cation. 4-CDP-2-C-methyl-D-erythritol 2-phosphate contacts are provided by residues 292–294 (DIG), 297–301 (FPDSD), 368–371 (TTEE), and F375.

It in the N-terminal section; belongs to the IspD/TarI cytidylyltransferase family. IspD subfamily. This sequence in the C-terminal section; belongs to the IspF family. A divalent metal cation serves as cofactor.

The enzyme catalyses 2-C-methyl-D-erythritol 4-phosphate + CTP + H(+) = 4-CDP-2-C-methyl-D-erythritol + diphosphate. It carries out the reaction 4-CDP-2-C-methyl-D-erythritol 2-phosphate = 2-C-methyl-D-erythritol 2,4-cyclic diphosphate + CMP. It participates in isoprenoid biosynthesis; isopentenyl diphosphate biosynthesis via DXP pathway; isopentenyl diphosphate from 1-deoxy-D-xylulose 5-phosphate: step 2/6. The protein operates within isoprenoid biosynthesis; isopentenyl diphosphate biosynthesis via DXP pathway; isopentenyl diphosphate from 1-deoxy-D-xylulose 5-phosphate: step 4/6. Its function is as follows. Bifunctional enzyme that catalyzes the formation of 4-diphosphocytidyl-2-C-methyl-D-erythritol from CTP and 2-C-methyl-D-erythritol 4-phosphate (MEP) (IspD), and catalyzes the conversion of 4-diphosphocytidyl-2-C-methyl-D-erythritol 2-phosphate (CDP-ME2P) to 2-C-methyl-D-erythritol 2,4-cyclodiphosphate (ME-CPP) with a corresponding release of cytidine 5-monophosphate (CMP) (IspF). This is Bifunctional enzyme IspD/IspF from Nitratidesulfovibrio vulgaris (strain ATCC 29579 / DSM 644 / CCUG 34227 / NCIMB 8303 / VKM B-1760 / Hildenborough) (Desulfovibrio vulgaris).